Consider the following 137-residue polypeptide: Fluoride-specific ion channel FluC 1 (137 aa).

The next 4 membrane-spanning stretches (helical) occupy residues 3–23, 42–62, 69–89, and 107–127; these read PLVVLAVAIAGGLGAVARLVL, INVTGSFVLGLVTALALGHGL, ILGTGFIGGYTTFSTASYEAV, and MMFLALGAAGLGLWLGGLAVA. Na(+) contacts are provided by Gly76 and Thr79.

Belongs to the fluoride channel Fluc/FEX (TC 1.A.43) family.

It localises to the cell membrane. It catalyses the reaction fluoride(in) = fluoride(out). Its activity is regulated as follows. Na(+) is not transported, but it plays an essential structural role and its presence is essential for fluoride channel function. Its function is as follows. Fluoride-specific ion channel. Important for reducing fluoride concentration in the cell, thus reducing its toxicity. The sequence is that of Fluoride-specific ion channel FluC 1 from Leifsonia xyli subsp. xyli (strain CTCB07).